Reading from the N-terminus, the 260-residue chain is tRNA (guanine-N(1)-)-methyltransferase (260 aa).

S-adenosyl-L-methionine is bound by residues Gly-117 and 137-142 (LGDFVL).

It belongs to the RNA methyltransferase TrmD family. In terms of assembly, homodimer.

Its subcellular location is the cytoplasm. The catalysed reaction is guanosine(37) in tRNA + S-adenosyl-L-methionine = N(1)-methylguanosine(37) in tRNA + S-adenosyl-L-homocysteine + H(+). Functionally, specifically methylates guanosine-37 in various tRNAs. The chain is tRNA (guanine-N(1)-)-methyltransferase from Cupriavidus metallidurans (strain ATCC 43123 / DSM 2839 / NBRC 102507 / CH34) (Ralstonia metallidurans).